A 122-amino-acid polypeptide reads, in one-letter code: Large ribosomal subunit protein uL14 (122 aa).

It belongs to the universal ribosomal protein uL14 family. Part of the 50S ribosomal subunit. Forms a cluster with proteins L3 and L19. In the 70S ribosome, L14 and L19 interact and together make contacts with the 16S rRNA in bridges B5 and B8.

Functionally, binds to 23S rRNA. Forms part of two intersubunit bridges in the 70S ribosome. This Chlorobium phaeobacteroides (strain DSM 266 / SMG 266 / 2430) protein is Large ribosomal subunit protein uL14.